The sequence spans 368 residues: Ferredoxin--NADP reductase (368 aa).

Residues D56, Q64, Y69, V109, F144, D310, and T351 each coordinate FAD.

This sequence belongs to the ferredoxin--NADP reductase type 2 family. Homodimer. Requires FAD as cofactor.

It catalyses the reaction 2 reduced [2Fe-2S]-[ferredoxin] + NADP(+) + H(+) = 2 oxidized [2Fe-2S]-[ferredoxin] + NADPH. This chain is Ferredoxin--NADP reductase, found in Leptothrix cholodnii (strain ATCC 51168 / LMG 8142 / SP-6) (Leptothrix discophora (strain SP-6)).